The sequence spans 562 residues: Glucocorticoid modulatory element-binding protein 1 (562 aa).

The residue at position 2 (Ala2) is an N-acetylalanine. The SAND domain maps to 72–156 (ASSIEGNEDM…RKMMDSGQID (85 aa)). Zn(2+) is bound at residue Cys103. Positions 129, 133, 136, and 147 each coordinate DNA. Zn(2+)-binding residues include His160, Cys164, and Cys168. The stretch at 311-355 (LDNRRKQVEQGEEQFLYTLADLERQLEEQKKQAQDPRLKSQTVQN) forms a coiled coil. The segment at 360–384 (PVSTPKPPKRPRLQRPASTTVLSPS) is disordered. Polar residues predominate over residues 375 to 384 (PASTTVLSPS).

Homodimer, and heterodimer of GMEB1 and GMEB2. Interacts with TRIM63. Interacts with the glucocorticoid receptor (NR3C1) and NCOA2/TIF2. May interact with HSP27 and CREB-binding protein (CBP). In terms of tissue distribution, ubiquitous. Low levels were detected in heart, brain, spleen, lung, liver, skeletal muscle, kidney and testis.

It localises to the nucleus. The protein resides in the cytoplasm. Its function is as follows. Trans-acting factor that binds to glucocorticoid modulatory elements (GME) present in the TAT (tyrosine aminotransferase) promoter and increases sensitivity to low concentrations of glucocorticoids. Also binds to the transferrin receptor promoter. The sequence is that of Glucocorticoid modulatory element-binding protein 1 (Gmeb1) from Mus musculus (Mouse).